Reading from the N-terminus, the 75-residue chain is Small integral membrane protein 7 (75 aa).

Positions 1 to 17 (MIGDILLFGTLLMNAGA) are cleaved as a signal peptide. The Extracellular segment spans residues 18–53 (VLNFKLKKKDTQGFGEESREPSTGDNIREFLLSLRY). Residues 54 to 74 (FRIFIALWNIFMMFCMIVLFG) form a helical membrane-spanning segment. Residue serine 75 is a topological domain, cytoplasmic.

The protein belongs to the SMIM7 family.

Its subcellular location is the membrane. The sequence is that of Small integral membrane protein 7 (SMIM7) from Homo sapiens (Human).